The sequence spans 1074 residues: Transmembrane protein 132E (1074 aa).

Residues 1 to 23 form the signal peptide; sequence MAPGMSGRRGAALLCLSVLLAHA. The Extracellular segment spans residues 26–894; it reads RSHPASPSPP…LTDLEIGMYA (869 aa). N70 and N91 each carry an N-linked (GlcNAc...) asparagine glycan. 2 disordered regions span residues 205–224 and 243–266; these read PAAPPSARRKSPDGLEPEAA and GGCGSARRGPGPGPGAAARAESPT. Positions 247–262 are enriched in low complexity; the sequence is SARRGPGPGPGAAARA. Residues N320 and N401 are each glycosylated (N-linked (GlcNAc...) asparagine). Disordered regions lie at residues 564–587 and 816–867; these read RRSARESEDEEEEEEERRQSANRG and GRDE…PVPP. The span at 843 to 854 shows a compositional bias: low complexity; that stretch reads GAGPPGTAIPAG. A helical membrane pass occupies residues 895–915; the sequence is LLGVFCLAILVFLINCIVFVL. At 916–1074 the chain is on the cytoplasmic side; it reads RYRHKRIPPE…NYMRRIKDIA (159 aa). A disordered region spans residues 962-1064; sequence VPACCHGDHH…TRPTPPPDLH (103 aa). 2 stretches are compositionally biased toward low complexity: residues 973-985 and 1016-1026; these read SGSSQTSVQSQVH and FTTFTTLPTEE. A compositionally biased stretch (acidic residues) spans 1035-1044; that stretch reads GEEEDEEEDL.

This sequence belongs to the TMEM132 family. Widely expressed, with highest levels in the cochlea. In the cochlea, detected in spiral ganglion, the organ of Corti and stria vascularis. In the organ of Corti, prominently expressed in the outer and inner hair cells, especially at the apical and basal region of the outer hair cell body (at protein level).

It is found in the membrane. In terms of biological role, required for normal inner ear hair cell function and hearing. The sequence is that of Transmembrane protein 132E (Tmem132e) from Mus musculus (Mouse).